Consider the following 728-residue polypeptide: MPVLPDRDVIDQLFSGNSADPFSLLGMHAADNGLQVRALLPDASEVWLLEQQTGRRLVQLNCDDARGFFSATVPRRKTPFRYQFEVRWQDHQQIVDDPYRFGTLLQDIDSWLLAEGTHLRPYERLGAHLSTLDDVEGVSFAVWAPNAQRVSVVGEFNFWDGRRHPMRLRRENGIWELFLPGVKAGQLYKYEIIDCYGNTQLKADPYAFEAQMRPDTASLVTPLPEVVENTPQRQRANDFDRPISIYEVHLGSWRRHTDDNFWLSYGELAVQLIDYVKDMGFTHIELLPINEHPFDGSWGYQPLGLYAPTRRFGTPADFKDFVAAAHRAGINVILDWVPGHFPSDAYGLANFDGTALYEYADPREGFHQDWNTLIYNYGRHEVRNYLAGNALYWLERYGIDALRVDAVASMIYRDYSRAEGEWVPNYYGGNENLEAIAFLRYTNQSVGKERPGAVTLAEESTDYPGVTLPPESNGLGFHYKWNLGWMHDTLNYMQCDPVHRKYHHNQMTFGMLYAYTENFVLPISHDEVVHGKKSILDRMPGDAWQKFANLRAYYGFMWAHPGKKLLFMGCEFAQGREWNFDSSLDWHLLEGLDGWHHGVQRLVRDLNHCYQQQAPLYERDYRPDGFEWLVVDDHDNSVFAFARYDAHGNELIAVSNFTPVPRHHYRIGISRPGEYREILNTDSHHYHGSNTGNQGRVVSEQIGNHGREHSISVTVPPLATIYLLREAQ.

The active-site Nucleophile is aspartate 405. Glutamate 458 serves as the catalytic Proton donor.

This sequence belongs to the glycosyl hydrolase 13 family. GlgB subfamily. As to quaternary structure, monomer.

The enzyme catalyses Transfers a segment of a (1-&gt;4)-alpha-D-glucan chain to a primary hydroxy group in a similar glucan chain.. It functions in the pathway glycan biosynthesis; glycogen biosynthesis. Its function is as follows. Catalyzes the formation of the alpha-1,6-glucosidic linkages in glycogen by scission of a 1,4-alpha-linked oligosaccharide from growing alpha-1,4-glucan chains and the subsequent attachment of the oligosaccharide to the alpha-1,6 position. The chain is 1,4-alpha-glucan branching enzyme GlgB from Serratia proteamaculans (strain 568).